The chain runs to 260 residues: Flap endonuclease Xni (260 aa).

Aspartate 112 is a Mg(2+) binding site. The 91-residue stretch at 168-258 (LQPSQLVDFW…FNLKDLRYTP (91 aa)) folds into the 5'-3' exonuclease domain. K(+)-binding residues include leucine 179, valine 190, and isoleucine 193. Residues 192-197 (GIGEKT) are interaction with DNA.

This sequence belongs to the Xni family. Mg(2+) serves as cofactor. K(+) is required as a cofactor.

Its function is as follows. Has flap endonuclease activity. During DNA replication, flap endonucleases cleave the 5'-overhanging flap structure that is generated by displacement synthesis when DNA polymerase encounters the 5'-end of a downstream Okazaki fragment. This chain is Flap endonuclease Xni, found in Tolumonas auensis (strain DSM 9187 / NBRC 110442 / TA 4).